The primary structure comprises 374 residues: uncharacterized protein (374 aa).

Belongs to the mimivirus R640 family.

The protein resides in the virion. This is an uncharacterized protein from Acanthamoeba polyphaga (Amoeba).